A 261-amino-acid polypeptide reads, in one-letter code: Transcription repressor OFP15 (261 aa).

The tract at residues 1 to 28 (MKLPFLNKNHSTSSYSSNSSSSSWPWPS) is disordered. Residues 11-28 (STSSYSSNSSSSSWPWPS) show a composition bias toward low complexity. The OVATE domain occupies 112–172 (FSLESDDPYS…FAAFVDLLMN (61 aa)).

In terms of assembly, interacts with BLH1 and BLH3. In terms of tissue distribution, expressed in roots, cauline leaves, shoots, flower buds and siliques.

Its subcellular location is the nucleus. Functionally, transcriptional repressor that regulates multiple aspects of plant growth and development through the regulation of BEL1-LIKE (BLH) and KNOX TALE (KNAT) homeodomain transcription factors. The polypeptide is Transcription repressor OFP15 (OFP15) (Arabidopsis thaliana (Mouse-ear cress)).